The primary structure comprises 313 residues: Ketimine reductase mu-crystallin (313 aa).

3,3',5-triiodo-L-thyronine is bound at residue arginine 47. Positions 90, 91, 118, 143, 145, 146, 167, 168, 169, 172, 204, 205, and 225 each coordinate NADPH. Glutamate 256 provides a ligand contact to 3,3',5-triiodo-L-thyronine. NADPH is bound at residue serine 291.

Belongs to the ornithine cyclodeaminase/mu-crystallin family. As to quaternary structure, homodimer. Binds the thyroid hormone triiodothyronine (T3); T3 binding inhibits enzymatic activity.

It localises to the cytoplasm. It carries out the reaction L-pipecolate + NADP(+) = Delta(1)-piperideine-2-carboxylate + NADPH + H(+). It catalyses the reaction L-pipecolate + NAD(+) = Delta(1)-piperideine-2-carboxylate + NADH + H(+). The catalysed reaction is L-proline + NADP(+) = 1-pyrroline-2-carboxylate + NADPH + H(+). The enzyme catalyses L-proline + NAD(+) = 1-pyrroline-2-carboxylate + NADH + H(+). It carries out the reaction (3R)-1,4-thiomorpholine-3-carboxylate + NAD(+) = 3,4-dehydrothiomorpholine-3-carboxylate + NADH + 2 H(+). It catalyses the reaction (3R)-1,4-thiomorpholine-3-carboxylate + NADP(+) = 3,4-dehydrothiomorpholine-3-carboxylate + NADPH + 2 H(+). The catalysed reaction is (S)-cystathionine ketimine + NADH + 2 H(+) = (3R,5S)-2,3,5,6,7-pentahydro-1,4-thiazepine-3,5-dicarboxylate + NAD(+). The enzyme catalyses (S)-cystathionine ketimine + NADPH + 2 H(+) = (3R,5S)-2,3,5,6,7-pentahydro-1,4-thiazepine-3,5-dicarboxylate + NADP(+). It carries out the reaction (R)-lanthionine ketimine + NADPH + 2 H(+) = (3R,5R)-1,4-thiomorpholine-3,5-dicarboxylate + NADP(+). It catalyses the reaction Delta(2)-thiazoline-2-carboxylate + NADPH + 2 H(+) = L-thiazolidine-2-carboxylate + NADP(+). In terms of biological role, catalyzes the NAD(P)H-dependent reduction of imine double bonds of a number of cyclic ketimine substrates, including sulfur-containing cyclic ketimines. Under physiological conditions, it efficiently catalyzes delta(1)-piperideine-2-carboxylate (P2C) and delta(1)-pyrroline-2-carboxylate (Pyr2C) reduction, suggesting a central role in lysine and glutamate metabolism. Additional substrates are delta(2)-thiazoline-2-carboxylate (T2C), 3,4-dehydrothiomorpholine-3-carboxylate (AECK), and (R)-lanthionine ketimine (LK) that is reduced at very low rate compared to other substrates. Also catalyzes the NAD(P)H-dependent reduction of (S)-cystathionine ketimine (CysK). This chain is Ketimine reductase mu-crystallin, found in Rattus norvegicus (Rat).